Consider the following 370-residue polypeptide: Maturase K (370 aa).

Belongs to the intron maturase 2 family. MatK subfamily.

The protein localises to the plastid. It localises to the chloroplast. Its function is as follows. Usually encoded in the trnK tRNA gene intron. Probably assists in splicing its own and other chloroplast group II introns. This Marchantia polymorpha (Common liverwort) protein is Maturase K.